The sequence spans 192 residues: dITP/XTP pyrophosphatase (192 aa).

Residue 7-12 (SNNKNK) coordinates substrate. Asp-68 acts as the Proton acceptor in catalysis. Asp-68 is a Mg(2+) binding site. Substrate is bound by residues Thr-69, 148-151 (FGYD), Lys-171, and 176-177 (HR).

Belongs to the HAM1 NTPase family. As to quaternary structure, homodimer. Mg(2+) is required as a cofactor.

It catalyses the reaction XTP + H2O = XMP + diphosphate + H(+). It carries out the reaction dITP + H2O = dIMP + diphosphate + H(+). The catalysed reaction is ITP + H2O = IMP + diphosphate + H(+). Pyrophosphatase that catalyzes the hydrolysis of nucleoside triphosphates to their monophosphate derivatives, with a high preference for the non-canonical purine nucleotides XTP (xanthosine triphosphate), dITP (deoxyinosine triphosphate) and ITP. Seems to function as a house-cleaning enzyme that removes non-canonical purine nucleotides from the nucleotide pool, thus preventing their incorporation into DNA/RNA and avoiding chromosomal lesions. This is dITP/XTP pyrophosphatase from Flavobacterium johnsoniae (strain ATCC 17061 / DSM 2064 / JCM 8514 / BCRC 14874 / CCUG 350202 / NBRC 14942 / NCIMB 11054 / UW101) (Cytophaga johnsonae).